The following is a 275-amino-acid chain: Formamidopyrimidine-DNA glycosylase (275 aa).

The active-site Schiff-base intermediate with DNA is Pro2. The active-site Proton donor is Glu3. The Proton donor; for beta-elimination activity role is filled by Lys58. Positions 91 and 110 each coordinate DNA. The FPG-type zinc finger occupies 238–272 (QVYGQTGKPCPRCGQAIVKLKVGGRGTHICPKCQK). Arg262 (proton donor; for delta-elimination activity) is an active-site residue.

Belongs to the FPG family. In terms of assembly, monomer. The cofactor is Zn(2+).

It catalyses the reaction Hydrolysis of DNA containing ring-opened 7-methylguanine residues, releasing 2,6-diamino-4-hydroxy-5-(N-methyl)formamidopyrimidine.. It carries out the reaction 2'-deoxyribonucleotide-(2'-deoxyribose 5'-phosphate)-2'-deoxyribonucleotide-DNA = a 3'-end 2'-deoxyribonucleotide-(2,3-dehydro-2,3-deoxyribose 5'-phosphate)-DNA + a 5'-end 5'-phospho-2'-deoxyribonucleoside-DNA + H(+). Involved in base excision repair of DNA damaged by oxidation or by mutagenic agents. Acts as a DNA glycosylase that recognizes and removes damaged bases. Has a preference for oxidized purines, such as 7,8-dihydro-8-oxoguanine (8-oxoG). Has AP (apurinic/apyrimidinic) lyase activity and introduces nicks in the DNA strand. Cleaves the DNA backbone by beta-delta elimination to generate a single-strand break at the site of the removed base with both 3'- and 5'-phosphates. This chain is Formamidopyrimidine-DNA glycosylase, found in Streptococcus pyogenes serotype M6 (strain ATCC BAA-946 / MGAS10394).